A 1135-amino-acid chain; its full sequence is uncharacterized protein (1135 aa).

An N-terminal signal peptide occupies residues 1 to 28 (MALFPRGILIALVLSFVLNLGLVTKIHA). The next 7 helical transmembrane spans lie at 332 to 352 (IVTA…LLAG), 359 to 379 (EYIN…GINI), 393 to 413 (MIQW…NWVM), 495 to 515 (MLVS…AFMV), 522 to 542 (MISI…FLFA), 555 to 575 (MISF…MFAV), and 700 to 720 (IKNI…MYNF).

It belongs to the TrbL/VirB6 family.

The protein resides in the cell membrane. This is an uncharacterized protein from Rickettsia typhi (strain ATCC VR-144 / Wilmington).